Here is a 584-residue protein sequence, read N- to C-terminus: Probable lysosomal cobalamin transporter (584 aa).

Transmembrane regions (helical) follow at residues 8-28 (LIWIVYAIVVGILSIVASTFV), 46-66 (IFTLTALLATVLLLPVDVALV), 93-113 (TVVYYFLYSLDAVLCLLIVPF), 144-164 (TLVFILLTIILFLVGFFVPVA), 189-209 (ALTFALGLLIVMGIIVYVIYS), 313-333 (LLGGLLLLAISVMIWISMLLT), 350-370 (ILGKINIINPVNWVLVEAASV), 376-396 (VIFIVLVLHLFTSSVVGIATI), 421-441 (ATVMLTLITLALNYSISMIVV), and 509-529 (GIVDFWAQFVFLGFSLIVLLI).

It belongs to the LIMR family. LMBRD1 subfamily.

The protein localises to the lysosome membrane. Its function is as follows. Probable lysosomal cobalamin transporter. Required to export cobalamin from lysosomes allowing its conversion to cofactors. This is Probable lysosomal cobalamin transporter from Coccidioides immitis (strain RS) (Valley fever fungus).